Consider the following 706-residue polypeptide: ABC transporter D family member 2, chloroplastic (706 aa).

Residues Met1–Cys44 constitute a chloroplast transit peptide. Ser45 is subject to N-acetylserine. 5 helical membrane-spanning segments follow: residues Leu88–Leu108, Phe124–Leu144, Thr200–Leu222, Ser237–Leu257, and Ile326–Ile346. The region spanning Leu88–Ser372 is the ABC transmembrane type-1 domain. Positions Leu430–Leu697 constitute an ABC transporter domain. Gly464 to Thr471 is a binding site for ATP. The tract at residues Thr545–Thr569 is disordered. Residues Ile560–Thr569 are compositionally biased toward basic and acidic residues.

Belongs to the ABC transporter superfamily. ABCD family. Peroxisomal fatty acyl CoA transporter (TC 3.A.1.203) subfamily. As to quaternary structure, homodimer or heterodimer.

The protein localises to the membrane. The protein resides in the plastid. It is found in the chloroplast. The polypeptide is ABC transporter D family member 2, chloroplastic (ABCC2) (Arabidopsis thaliana (Mouse-ear cress)).